Here is a 348-residue protein sequence, read N- to C-terminus: Putative S-adenosyl-L-methionine-dependent methyltransferase Mb3432 (348 aa).

S-adenosyl-L-methionine is bound by residues D171 and 200 to 201; that span reads DL.

The protein belongs to the UPF0677 family.

Exhibits S-adenosyl-L-methionine-dependent methyltransferase activity. In Mycobacterium bovis (strain ATCC BAA-935 / AF2122/97), this protein is Putative S-adenosyl-L-methionine-dependent methyltransferase Mb3432.